The following is a 372-amino-acid chain: Alginate lyase (372 aa).

Positions 1-22 (MKTRLALPCLLGSLLLSSAVHA) are cleaved as a signal peptide. Residues 61–62 (SK), 134–135 (HT), and Tyr-252 contribute to the substrate site.

Belongs to the polysaccharide lyase 5 family.

It localises to the periplasm. The enzyme catalyses Eliminative cleavage of alginate to give oligosaccharides with 4-deoxy-alpha-L-erythro-hex-4-enuronosyl groups at their non-reducing ends and beta-D-mannuronate at their reducing end.. Monovalent cations such as potassium and sodium enhance activity, as well as a combined action of these cations with magnesium. However, other cations like calcium, cobalt, manganese and zinc, or the presence of EDTA, do not affect the enzymatic activity. Functionally, catalyzes the depolymerization of alginate by cleaving the beta-1,4 glycosidic bond between two adjacent sugar residues via a beta-elimination mechanism. Degrades deacetylated polymannuronate alginate more efficiently than non-deacetylated polyM. Is able to degrade its own alginate, but at a lower efficiency than that produced from M.pyriferia and P.aeruginosa. May serve to degrade mislocalized alginate that is trapped in the periplasmic space. The chain is Alginate lyase from Azotobacter chroococcum mcd 1.